A 269-amino-acid chain; its full sequence is Tryptophan synthase alpha chain (269 aa).

Catalysis depends on proton acceptor residues Glu50 and Asp61.

Belongs to the TrpA family. Tetramer of two alpha and two beta chains.

The catalysed reaction is (1S,2R)-1-C-(indol-3-yl)glycerol 3-phosphate + L-serine = D-glyceraldehyde 3-phosphate + L-tryptophan + H2O. It participates in amino-acid biosynthesis; L-tryptophan biosynthesis; L-tryptophan from chorismate: step 5/5. Functionally, the alpha subunit is responsible for the aldol cleavage of indoleglycerol phosphate to indole and glyceraldehyde 3-phosphate. This chain is Tryptophan synthase alpha chain, found in Francisella tularensis subsp. holarctica (strain FTNF002-00 / FTA).